The following is a 240-amino-acid chain: Ribosomal RNA small subunit methyltransferase G (240 aa).

S-adenosyl-L-methionine contacts are provided by residues Gly80, Phe85, 103-105, 131-132, and Arg150; these read DSS and AE.

Belongs to the methyltransferase superfamily. RNA methyltransferase RsmG family.

Its subcellular location is the cytoplasm. Specifically methylates the N7 position of a guanine in 16S rRNA. In Thermoanaerobacter sp. (strain X514), this protein is Ribosomal RNA small subunit methyltransferase G.